The primary structure comprises 184 residues: Glutathione-regulated potassium-efflux system ancillary protein KefG (184 aa).

It belongs to the NAD(P)H dehydrogenase (quinone) family. KefG subfamily. In terms of assembly, interacts with KefB.

Its subcellular location is the cell inner membrane. The catalysed reaction is a quinone + NADH + H(+) = a quinol + NAD(+). It catalyses the reaction a quinone + NADPH + H(+) = a quinol + NADP(+). Its function is as follows. Regulatory subunit of a potassium efflux system that confers protection against electrophiles. Required for full activity of KefB. The protein is Glutathione-regulated potassium-efflux system ancillary protein KefG of Erwinia tasmaniensis (strain DSM 17950 / CFBP 7177 / CIP 109463 / NCPPB 4357 / Et1/99).